Consider the following 71-residue polypeptide: Large ribosomal subunit protein eL38 (71 aa).

Belongs to the eukaryotic ribosomal protein eL38 family.

This chain is Large ribosomal subunit protein eL38 (RpL38), found in Ixodes scapularis (Black-legged tick).